A 194-amino-acid chain; its full sequence is Xanthine phosphoribosyltransferase (194 aa).

Xanthine-binding residues include Leu-20 and Asn-27. 128 to 132 (ANGQA) is a 5-phospho-alpha-D-ribose 1-diphosphate binding site. Lys-156 is a xanthine binding site.

Belongs to the purine/pyrimidine phosphoribosyltransferase family. Xpt subfamily. As to quaternary structure, homodimer.

It localises to the cytoplasm. It carries out the reaction XMP + diphosphate = xanthine + 5-phospho-alpha-D-ribose 1-diphosphate. It participates in purine metabolism; XMP biosynthesis via salvage pathway; XMP from xanthine: step 1/1. Functionally, converts the preformed base xanthine, a product of nucleic acid breakdown, to xanthosine 5'-monophosphate (XMP), so that it can be reused for RNA or DNA synthesis. The protein is Xanthine phosphoribosyltransferase (xpt) of Bacillus subtilis (strain 168).